Reading from the N-terminus, the 500-residue chain is GTPase Der (500 aa).

EngA-type G domains are found at residues 3–166 (PVVA…MEEL) and 211–384 (IKLA…VSAT). GTP contacts are provided by residues 9–16 (GRPNVGKS), 56–60 (DTGGI), 118–121 (NKID), 217–224 (GRPNVGKS), 264–268 (DTAGV), and 329–332 (NKWD). A KH-like domain is found at 385–469 (KRVGTSVLTR…PIRIQFQNSE (85 aa)). A disordered region spans residues 468–500 (SENPFEDRGGKLTMSQERQRKRLLGAVKNRNKK). Over residues 486 to 500 (QRKRLLGAVKNRNKK) the composition is skewed to basic residues.

The protein belongs to the TRAFAC class TrmE-Era-EngA-EngB-Septin-like GTPase superfamily. EngA (Der) GTPase family. Associates with the 50S ribosomal subunit.

GTPase that plays an essential role in the late steps of ribosome biogenesis. This Aliivibrio fischeri (strain ATCC 700601 / ES114) (Vibrio fischeri) protein is GTPase Der.